A 550-amino-acid polypeptide reads, in one-letter code: Probable endochitinase (550 aa).

An N-terminal signal peptide occupies residues 1 to 16; that stretch reads MLHYLATILWLAVAHA. Asparagine 146 and asparagine 172 each carry an N-linked (GlcNAc...) asparagine; by host glycan. Residues 147 to 547 form the GH18 domain; sequence KTVAAYFVEW…NAMNERVRVK (401 aa). Glutamate 304 (proton donor) is an active-site residue. Asparagine 344 carries N-linked (GlcNAc...) asparagine; by host glycosylation. The Prevents secretion from ER motif lies at 547–550; sequence KDEL.

This sequence belongs to the glycosyl hydrolase 18 family. Chitinase class II subfamily.

Its subcellular location is the host endoplasmic reticulum lumen. It catalyses the reaction Random endo-hydrolysis of N-acetyl-beta-D-glucosaminide (1-&gt;4)-beta-linkages in chitin and chitodextrins.. This Orgyia pseudotsugata (Douglas-fir tussock moth) protein is Probable endochitinase.